We begin with the raw amino-acid sequence, 543 residues long: Gap junction alpha-10 protein (543 aa).

At 1-16 (MGDWNLLGGILEEVHS) the chain is on the cytoplasmic side. The chain crosses the membrane as a helical span at residues 17–37 (HSTIVGKIWLTILFIFRMLVL). Over 38 to 76 (RVAAEDVWDDEQSAFACNTRQPGCNNICYDDAFPISLIR) the chain is Extracellular. The helical transmembrane segment at 77–97 (FWVLQIIFVSSPSLVYMGHAL) threads the bilayer. Residues 98 to 165 (YRLRAFEKDR…TYVLHILTRS (68 aa)) lie on the Cytoplasmic side of the membrane. Residues 166 to 186 (VLEVGFMIGQYILYGFQMHPL) traverse the membrane as a helical segment. The Extracellular portion of the chain corresponds to 187–209 (YKCTQPPCPNAVDCFVSRPTEKT). A helical membrane pass occupies residues 210–230 (IFMLFMHSIAAISLLLNILEI). The Cytoplasmic portion of the chain corresponds to 231–543 (FHLGIRKIMR…HSIHSVKFNS (313 aa)). Disordered stretches follow at residues 306–359 (PQPR…SSFG) and 379–424 (PSFA…DRSR). The segment covering 317–328 (NGKKDWSEKDQH) has biased composition (basic and acidic residues). Positions 344–359 (AGNQHLGQQSDHSSFG) are enriched in polar residues. Over residues 400 to 413 (TDLHSHCRDSEGSM) the composition is skewed to basic and acidic residues.

Belongs to the connexin family. Alpha-type (group II) subfamily. A connexon is composed of a hexamer of connexins. In terms of tissue distribution, expressed in skeletal muscle and heart.

Its subcellular location is the cell membrane. The protein resides in the cell junction. It is found in the gap junction. Functionally, one gap junction consists of a cluster of closely packed pairs of transmembrane channels, the connexons, through which materials of low MW diffuse from one cell to a neighboring cell. Involved in tracer coupling between horizontal cells of the retina. May play a role in the regulation of horizontal cell patterning. The protein is Gap junction alpha-10 protein (GJA10) of Homo sapiens (Human).